Consider the following 287-residue polypeptide: IQ domain-containing protein K (287 aa).

In Homo sapiens (Human), this protein is IQ domain-containing protein K (IQCK).